Reading from the N-terminus, the 129-residue chain is Large ribosomal subunit protein uL22 (129 aa).

This sequence belongs to the universal ribosomal protein uL22 family. Part of the 50S ribosomal subunit.

This protein binds specifically to 23S rRNA; its binding is stimulated by other ribosomal proteins, e.g. L4, L17, and L20. It is important during the early stages of 50S assembly. It makes multiple contacts with different domains of the 23S rRNA in the assembled 50S subunit and ribosome. Functionally, the globular domain of the protein is located near the polypeptide exit tunnel on the outside of the subunit, while an extended beta-hairpin is found that lines the wall of the exit tunnel in the center of the 70S ribosome. The sequence is that of Large ribosomal subunit protein uL22 from Bartonella quintana (strain Toulouse) (Rochalimaea quintana).